An 89-amino-acid polypeptide reads, in one-letter code: Small ribosomal subunit protein uS15 (89 aa).

The protein belongs to the universal ribosomal protein uS15 family. In terms of assembly, part of the 30S ribosomal subunit. Forms a bridge to the 50S subunit in the 70S ribosome, contacting the 23S rRNA.

Functionally, one of the primary rRNA binding proteins, it binds directly to 16S rRNA where it helps nucleate assembly of the platform of the 30S subunit by binding and bridging several RNA helices of the 16S rRNA. Its function is as follows. Forms an intersubunit bridge (bridge B4) with the 23S rRNA of the 50S subunit in the ribosome. This is Small ribosomal subunit protein uS15 from Streptococcus uberis (strain ATCC BAA-854 / 0140J).